Consider the following 366-residue polypeptide: S-adenosylmethionine decarboxylase proenzyme 1 (366 aa).

Residues glutamate 9 and glutamate 12 contribute to the active site. A substrate-binding site is contributed by glutamate 68. Serine 69 serves as the catalytic Schiff-base intermediate with substrate; via pyruvic acid. Serine 69 bears the Pyruvic acid (Ser); by autocatalysis mark. Residue cysteine 83 is the Proton donor; for catalytic activity of the active site. Catalysis depends on proton acceptor; for processing activity residues serine 233 and histidine 246. A substrate-binding site is contributed by glutamate 250.

Belongs to the eukaryotic AdoMetDC family. It depends on pyruvate as a cofactor. Post-translationally, is synthesized initially as an inactive proenzyme. Formation of the active enzyme involves a self-maturation process in which the active site pyruvoyl group is generated from an internal serine residue via an autocatalytic post-translational modification. Two non-identical subunits are generated from the proenzyme in this reaction, and the pyruvate is formed at the N-terminus of the alpha chain, which is derived from the carboxyl end of the proenzyme. The post-translation cleavage follows an unusual pathway, termed non-hydrolytic serinolysis, in which the side chain hydroxyl group of the serine supplies its oxygen atom to form the C-terminus of the beta chain, while the remainder of the serine residue undergoes an oxidative deamination to produce ammonia and the pyruvoyl group blocking the N-terminus of the alpha chain.

The catalysed reaction is S-adenosyl-L-methionine + H(+) = S-adenosyl 3-(methylsulfanyl)propylamine + CO2. It participates in amine and polyamine biosynthesis; S-adenosylmethioninamine biosynthesis; S-adenosylmethioninamine from S-adenosyl-L-methionine: step 1/1. Its function is as follows. Essential for biosynthesis of the polyamines spermidine and spermine. Essential for polyamine homeostasis, and normal plant embryogenesis, growth and development. The sequence is that of S-adenosylmethionine decarboxylase proenzyme 1 from Arabidopsis thaliana (Mouse-ear cress).